The primary structure comprises 426 residues: Endoglucanase Z (426 aa).

The signal sequence occupies residues 1–43 (MPLSYLDKNPVIDSKKHALRKKLFLSCAYFGLSLACLSSNAWA). The catalytic stretch occupies residues 44 to 332 (SVEPLSVNGN…VKSIIQSWPY (289 aa)). Glu-176 serves as the catalytic Proton donor. The active-site Nucleophile is the Glu-263. The linker stretch occupies residues 333 to 366 (KAGSAASATTDPSTDTTTDTTVDEPTTTDTPATA). The disordered stretch occupies residues 336 to 367 (SAASATTDPSTDTTTDTTVDEPTTTDTPATAD). The segment at 367–426 (DCANANVYPNWVSKDWAGGQPTHNEAGQSIVYKGNLYTANWYTASVPGSDSSWTQVGSCN) is cellulose-binding. An intrachain disulfide couples Cys-368 to Cys-425.

Belongs to the glycosyl hydrolase 5 (cellulase A) family.

The protein resides in the secreted. The enzyme catalyses Endohydrolysis of (1-&gt;4)-beta-D-glucosidic linkages in cellulose, lichenin and cereal beta-D-glucans.. In terms of biological role, represents 97% of the global cellulase activity. This is Endoglucanase Z (celZ) from Dickeya dadantii (strain 3937) (Erwinia chrysanthemi (strain 3937)).